The following is a 367-amino-acid chain: Dual specificity protein phosphatase 1 (367 aa).

The Rhodanese domain occupies 20–137 (RAAQCLLLDC…FSASCPELCS (118 aa)). In terms of domain architecture, Tyrosine-protein phosphatase spans 173 to 314 (GPVEILSFLY…LLQFESQVLA (142 aa)). The active-site Phosphocysteine intermediate is the C258. Residues S359 and S364 each carry the phosphoserine; by MAPK1 and MAPK3 modification.

This sequence belongs to the protein-tyrosine phosphatase family. Non-receptor class dual specificity subfamily. Post-translationally, phosphorylation at Ser-359 and Ser-364 by MAPK1/ERK2 and MAPK3/ERK1 reduces its rate of degradation. 'Lys-48'-linked polyubiquitinated by NEURL3, leading to proteasomal degradation. Brain. High level expression seen in the cingulate gyrus within the retrospinal cortex, ventral and medial divisions of the anterior thalamus and the medial geniculate nucleus. Expressed at moderate levels in the parietal and temporal cortex. Expressed in the cerebellum.

It localises to the nucleus. It catalyses the reaction O-phospho-L-tyrosyl-[protein] + H2O = L-tyrosyl-[protein] + phosphate. The enzyme catalyses O-phospho-L-seryl-[protein] + H2O = L-seryl-[protein] + phosphate. It carries out the reaction O-phospho-L-threonyl-[protein] + H2O = L-threonyl-[protein] + phosphate. Dual specificity phosphatase that dephosphorylates MAP kinase MAPK1/ERK2 on both 'Thr-183' and 'Tyr-185', regulating its activity during the meiotic cell cycle. This Rattus norvegicus (Rat) protein is Dual specificity protein phosphatase 1.